Reading from the N-terminus, the 123-residue chain is Large ribosomal subunit protein uL24 (123 aa).

The protein belongs to the universal ribosomal protein uL24 family. In terms of assembly, part of the 50S ribosomal subunit.

One of two assembly initiator proteins, it binds directly to the 5'-end of the 23S rRNA, where it nucleates assembly of the 50S subunit. Functionally, located at the polypeptide exit tunnel on the outside of the subunit. The chain is Large ribosomal subunit protein uL24 from Methanocella arvoryzae (strain DSM 22066 / NBRC 105507 / MRE50).